The primary structure comprises 983 residues: 3',5'-cyclic-AMP phosphodiesterase, isoforms N/G (983 aa).

Disordered stretches follow at residues methionine 31–leucine 333, serine 349–serine 370, valine 400–glycine 429, and serine 528–threonine 566. Residues glycine 35–asparagine 50 are compositionally biased toward basic and acidic residues. Residues arginine 51–asparagine 60 show a composition bias toward polar residues. Gly residues predominate over residues serine 84–isoleucine 97. 2 stretches are compositionally biased toward low complexity: residues leucine 112 to serine 121 and glutamine 145 to serine 167. The segment covering alanine 174–glutamate 199 has biased composition (acidic residues). Composition is skewed to low complexity over residues serine 219–serine 234 and alanine 248–methionine 261. 3 stretches are compositionally biased toward polar residues: residues serine 268–arginine 287, lysine 358–serine 368, and proline 401–glycine 419. The 330-residue stretch at valine 569–serine 898 folds into the PDEase domain. The Proton donor role is filled by histidine 645. 3',5'-cyclic AMP is bound at residue histidine 645 to histidine 649. A divalent metal cation-binding residues include histidine 649, histidine 685, aspartate 686, and aspartate 803. Aspartate 686, aspartate 803, and glutamine 854 together coordinate 3',5'-cyclic AMP. A compositionally biased stretch (acidic residues) spans glutamate 920 to glycine 937. The interval glutamate 920 to methionine 983 is disordered. Residues glycine 938–serine 955 are compositionally biased toward low complexity. The span at glycine 956–methionine 967 shows a compositional bias: gly residues. Residues glycine 973 to methionine 983 show a composition bias toward polar residues.

This sequence belongs to the cyclic nucleotide phosphodiesterase family. PDE4 subfamily. Monomer. A divalent metal cation is required as a cofactor.

It catalyses the reaction 3',5'-cyclic AMP + H2O = AMP + H(+). It participates in purine metabolism; 3',5'-cyclic AMP degradation; AMP from 3',5'-cyclic AMP: step 1/1. Hydrolyzes the second messenger cAMP, which is a key regulator of many important physiological processes. Vital for female fertility. Required for learning/memory. In Drosophila melanogaster (Fruit fly), this protein is 3',5'-cyclic-AMP phosphodiesterase, isoforms N/G.